The primary structure comprises 132 residues: UPF0719 inner membrane protein YjfL (132 aa).

Residues 1 to 6 (MHILDS) lie on the Periplasmic side of the membrane. Residues 7–27 (LLAFSAYFFIGVAMVIIFLFI) form a helical membrane-spanning segment. Over 28-46 (YSKITPHNEWQLIKNNNTA) the chain is Cytoplasmic. Residues 47–67 (ASLAFSGTLLGYVIPLSSAAI) form a helical membrane-spanning segment. At 68–71 (NAVS) the chain is on the periplasmic side. Residues 72–92 (IPDYFAWGGIALVIQLLVFAG) form a helical membrane-spanning segment. Residues 93-109 (VRLYMPALSEKIINHNT) lie on the Cytoplasmic side of the membrane. Residues 110–130 (AAGMFMGTAALAGGIFNAACM) traverse the membrane as a helical segment. At 131-132 (TW) the chain is on the periplasmic side.

The protein belongs to the UPF0719 family.

The protein resides in the cell inner membrane. This Escherichia coli O157:H7 protein is UPF0719 inner membrane protein YjfL (yjfL).